Consider the following 286-residue polypeptide: GTP cyclohydrolase 1 type 2 homolog (286 aa).

A divalent metal cation is bound by residues His66, His67, Asp103, His254, and Glu258.

Belongs to the GTP cyclohydrolase I type 2/NIF3 family. Homohexamer.

The polypeptide is GTP cyclohydrolase 1 type 2 homolog (Treponema pallidum (strain Nichols)).